The sequence spans 250 residues: Ribonuclease 3 (250 aa).

Residues 1–15 show a composition bias toward basic residues; that stretch reads MTKTPAKKKRARSSK. A disordered region spans residues 1–21; it reads MTKTPAKKKRARSSKAKGTDA. The region spanning 22–150 is the RNase III domain; that stretch reads NAALEARIGH…VIGAIFLDGG (129 aa). Glu-63 lines the Mg(2+) pocket. The active site involves Asp-67. The Mg(2+) site is built by Asp-136 and Glu-139. Residue Glu-139 is part of the active site. The DRBM domain maps to 175 to 244; that stretch reads DPKTVLQEWA…ASVMIEREGV (70 aa).

The protein belongs to the ribonuclease III family. In terms of assembly, homodimer. The cofactor is Mg(2+).

The protein resides in the cytoplasm. It catalyses the reaction Endonucleolytic cleavage to 5'-phosphomonoester.. In terms of biological role, digests double-stranded RNA. Involved in the processing of primary rRNA transcript to yield the immediate precursors to the large and small rRNAs (23S and 16S). Processes some mRNAs, and tRNAs when they are encoded in the rRNA operon. Processes pre-crRNA and tracrRNA of type II CRISPR loci if present in the organism. The chain is Ribonuclease 3 from Bradyrhizobium diazoefficiens (strain JCM 10833 / BCRC 13528 / IAM 13628 / NBRC 14792 / USDA 110).